The sequence spans 227 residues: Ion-translocating oxidoreductase complex subunit E (227 aa).

Helical transmembrane passes span 57–77, 89–109, 111–131, 146–166, and 200–220; these read LGLGLATLFVLLCTNVTISLF, IYVMVIATVVTAVQLLMNAFA, PVYQSLGIFIPLIVTNCIVIG, AFDGLATGLGMTLSLVLLGAI, and GLLLAILPPGAFIGLGLILAV.

It belongs to the NqrDE/RnfAE family. In terms of assembly, the complex is composed of six subunits: RnfA, RnfB, RnfC, RnfD, RnfE and RnfG.

The protein resides in the cell inner membrane. Part of a membrane-bound complex that couples electron transfer with translocation of ions across the membrane. This Haemophilus ducreyi (strain 35000HP / ATCC 700724) protein is Ion-translocating oxidoreductase complex subunit E.